We begin with the raw amino-acid sequence, 358 residues long: Putative purine permease 12 (358 aa).

The next 10 membrane-spanning stretches (helical) occupy residues 29 to 49 (WILV…SVLL), 62 to 82 (WIST…LSLL), 100 to 120 (LVWI…LYSV), 128 to 148 (STYS…YYYI), 153 to 173 (ITCL…LVSL), 189 to 209 (LIGC…LSLM), 235 to 255 (VASC…LLSV), 280 to 299 (LGCV…FSNL), 300 to 316 (ISTL…IAVF), and 320 to 340 (LTEV…FYIY).

It belongs to the purine permeases (TC 2.A.7.14) family.

The protein resides in the membrane. This is Putative purine permease 12 (PUP12) from Arabidopsis thaliana (Mouse-ear cress).